A 199-amino-acid polypeptide reads, in one-letter code: MSEEQILNTHNASILLSAANKSHYPQDDLPEIALAGRSNVGKSSFINTILGRKSLARTSSKPGKTQLLNFFNVDDKLRLVDVPGYGYAKVSKAERARWGKMIEEYLTTRQNLRAVVSLVDFRHESSQDDIQMYEFLKYYEIPVIIVATKADKVPRGRWNKHESMVKKSLNFDQTDAFIIFSSVERIGIDESWDTILEYL.

Residues 28-199 form the EngB-type G domain; sequence DLPEIALAGR…ESWDTILEYL (172 aa). GTP is bound by residues 36-43, 63-67, 81-84, 148-151, and 180-182; these read GRSNVGKS, GKTQL, DVPG, TKAD, and FSS. 2 residues coordinate Mg(2+): S43 and T65.

The protein belongs to the TRAFAC class TrmE-Era-EngA-EngB-Septin-like GTPase superfamily. EngB GTPase family. Mg(2+) serves as cofactor.

In terms of biological role, necessary for normal cell division and for the maintenance of normal septation. This chain is Probable GTP-binding protein EngB, found in Streptococcus equi subsp. equi (strain 4047).